The primary structure comprises 176 residues: Adenylyl-sulfate kinase (176 aa).

12–19 provides a ligand contact to ATP; the sequence is GLSGAGKT. Ser86 acts as the Phosphoserine intermediate in catalysis.

Belongs to the APS kinase family.

The enzyme catalyses adenosine 5'-phosphosulfate + ATP = 3'-phosphoadenylyl sulfate + ADP + H(+). It participates in sulfur metabolism; hydrogen sulfide biosynthesis; sulfite from sulfate: step 2/3. Catalyzes the synthesis of activated sulfate. The sequence is that of Adenylyl-sulfate kinase from Synechococcus sp. (strain JA-3-3Ab) (Cyanobacteria bacterium Yellowstone A-Prime).